The sequence spans 158 residues: Urease accessory protein UreE (158 aa).

This sequence belongs to the UreE family.

It localises to the cytoplasm. Involved in urease metallocenter assembly. Binds nickel. Probably functions as a nickel donor during metallocenter assembly. The polypeptide is Urease accessory protein UreE (Microcystis aeruginosa (strain NIES-843 / IAM M-2473)).